Consider the following 217-residue polypeptide: Claudin-9 (217 aa).

Residues 1–7 (MASTGLE) lie on the Cytoplasmic side of the membrane. A helical membrane pass occupies residues 8–28 (LLGMTLAVLGWLGTLVSCALP). Over 29–81 (LWKVTAFIGNSIVVAQVVWEGLWMSCVVQSTGQMQCKVYDSLLALPQDLQAAR) the chain is Extracellular. The helical transmembrane segment at 82-102 (ALCVIALLLALLGLLVAITGA) threads the bilayer. At 103–116 (QCTTCVEDEGAKAR) the chain is on the cytoplasmic side. A helical membrane pass occupies residues 117–137 (IVLTAGVILLLAGILVLIPVC). Over 138 to 159 (WTAHAIIQDFYNPLVAEALKRE) the chain is Extracellular. The chain crosses the membrane as a helical span at residues 160 to 180 (LGASLYLGWAAAALLMLGGGL). Over 181-217 (LCCTCPPPQVERPRGPRLGYSIPSRSGASGLDKRDYV) the chain is Cytoplasmic. Positions 194 to 217 (RGPRLGYSIPSRSGASGLDKRDYV) are disordered.

It belongs to the claudin family. As to quaternary structure, interacts with CLDN1, CD81 and OCLN. Expressed in the liver, in peripheral blood mononuclear cells and hepatocarcinoma cell lines.

It localises to the cell junction. Its subcellular location is the tight junction. The protein localises to the cell membrane. Plays a major role in tight junction-specific obliteration of the intercellular space, through calcium-independent cell-adhesion activity. Its function is as follows. (Microbial infection) Acts as a receptor for hepatitis C virus (HCV) entry into hepatic cells. This is Claudin-9 (CLDN9) from Homo sapiens (Human).